The chain runs to 433 residues: Serine--tRNA ligase (433 aa).

239–241 provides a ligand contact to L-serine; it reads TAE. 270-272 is an ATP binding site; that stretch reads RSE. An L-serine-binding site is contributed by E293. 357–360 contacts ATP; it reads EISS. S393 is an L-serine binding site.

It belongs to the class-II aminoacyl-tRNA synthetase family. Type-1 seryl-tRNA synthetase subfamily. As to quaternary structure, homodimer. The tRNA molecule binds across the dimer.

The protein resides in the cytoplasm. It carries out the reaction tRNA(Ser) + L-serine + ATP = L-seryl-tRNA(Ser) + AMP + diphosphate + H(+). The enzyme catalyses tRNA(Sec) + L-serine + ATP = L-seryl-tRNA(Sec) + AMP + diphosphate + H(+). It participates in aminoacyl-tRNA biosynthesis; selenocysteinyl-tRNA(Sec) biosynthesis; L-seryl-tRNA(Sec) from L-serine and tRNA(Sec): step 1/1. Functionally, catalyzes the attachment of serine to tRNA(Ser). Is also able to aminoacylate tRNA(Sec) with serine, to form the misacylated tRNA L-seryl-tRNA(Sec), which will be further converted into selenocysteinyl-tRNA(Sec). The chain is Serine--tRNA ligase from Sorangium cellulosum (strain So ce56) (Polyangium cellulosum (strain So ce56)).